Consider the following 943-residue polypeptide: Valine--tRNA ligase (943 aa).

A 'HIGH' region motif is present at residues 45–55 (PNVTGTLHMGH). A 'KMSKS' region motif is present at residues 541–545 (KMSKS). Lysine 544 provides a ligand contact to ATP. Residues 875-934 (IDVAAERIRLAKEIEKLEKQISIAQGKLANEGFVARAPAAVIDQEKQRVADFTATLEQLK) are a coiled coil.

Belongs to the class-I aminoacyl-tRNA synthetase family. ValS type 1 subfamily. Monomer.

The protein localises to the cytoplasm. It catalyses the reaction tRNA(Val) + L-valine + ATP = L-valyl-tRNA(Val) + AMP + diphosphate. Its function is as follows. Catalyzes the attachment of valine to tRNA(Val). As ValRS can inadvertently accommodate and process structurally similar amino acids such as threonine, to avoid such errors, it has a 'posttransfer' editing activity that hydrolyzes mischarged Thr-tRNA(Val) in a tRNA-dependent manner. In Dechloromonas aromatica (strain RCB), this protein is Valine--tRNA ligase.